Consider the following 96-residue polypeptide: Large ribosomal subunit protein bL27 (96 aa).

Residues 12 to 33 are disordered; sequence HKGGGSSANGRNSAGRRLGAKA. The span at 19–28 shows a compositional bias: low complexity; the sequence is ANGRNSAGRR.

This sequence belongs to the bacterial ribosomal protein bL27 family.

The sequence is that of Large ribosomal subunit protein bL27 from Lactobacillus helveticus (strain DPC 4571).